The primary structure comprises 531 residues: Flavin-containing monooxygenase 3 (531 aa).

FAD is bound by residues glycine 9–serine 13, glutamate 32, leucine 40–tryptophan 41, and asparagine 61–serine 62. NADP(+) contacts are provided by residues threonine 60–asparagine 61 and serine 195–aspartate 198. Serine 401 carries the phosphoserine modification. Residues tyrosine 511 to isoleucine 531 traverse the membrane as a helical segment.

The protein belongs to the FMO family. FAD serves as cofactor. As to expression, detected in liver and kidney (at protein level). Expressed in kidney and liver. Weakly expressed in lung. Does not seem to be expressed in brain, adipose tissue, or muscle.

It localises to the microsome membrane. Its subcellular location is the endoplasmic reticulum membrane. The catalysed reaction is trimethylamine + NADPH + O2 = trimethylamine N-oxide + NADP(+) + H2O. The enzyme catalyses N,N-dimethylaniline + NADPH + O2 + H(+) = N,N-dimethylaniline N-oxide + NADP(+) + H2O. It catalyses the reaction hypotaurine + NADPH + O2 + H(+) = taurine + NADP(+) + H2O. It carries out the reaction (S)-nicotine + NADPH + O2 = trans-(S)-nicotine N(1')-oxide + NADP(+) + H2O. The catalysed reaction is albendazole + NADPH + O2 + H(+) = albendazole S-oxide + NADP(+) + H2O. In terms of biological role, essential hepatic enzyme that catalyzes the oxygenation of a wide variety of nitrogen- and sulfur-containing compounds including drugs as well as dietary compounds. Plays an important role in the metabolism of trimethylamine (TMA), via the production of trimethylamine N-oxide (TMAO) metabolite. TMA is generated by the action of gut microbiota using dietary precursors such as choline, choline containing compounds, betaine or L-carnitine. By regulating TMAO concentration, FMO3 directly impacts both platelet responsiveness and rate of thrombus formation. The chain is Flavin-containing monooxygenase 3 (Fmo3) from Rattus norvegicus (Rat).